Reading from the N-terminus, the 688-residue chain is Elongation factor G (688 aa).

The tr-type G domain maps to 8–282 (INFRNFGIMA…AVVDFLPSPV (275 aa)). Residues 17–24 (AHIDAGKT), 81–85 (DTPGH), and 135–138 (NKMD) contribute to the GTP site.

Belongs to the TRAFAC class translation factor GTPase superfamily. Classic translation factor GTPase family. EF-G/EF-2 subfamily.

Its subcellular location is the cytoplasm. Functionally, catalyzes the GTP-dependent ribosomal translocation step during translation elongation. During this step, the ribosome changes from the pre-translocational (PRE) to the post-translocational (POST) state as the newly formed A-site-bound peptidyl-tRNA and P-site-bound deacylated tRNA move to the P and E sites, respectively. Catalyzes the coordinated movement of the two tRNA molecules, the mRNA and conformational changes in the ribosome. This Mycoplasma pneumoniae (strain ATCC 29342 / M129 / Subtype 1) (Mycoplasmoides pneumoniae) protein is Elongation factor G (fusA).